We begin with the raw amino-acid sequence, 240 residues long: Serine protease SplB (240 aa).

An N-terminal signal peptide occupies residues Met-1–Ala-36. Catalysis depends on charge relay system residues His-75, Asp-113, and Ser-193.

The protein belongs to the peptidase S1B family.

It localises to the secreted. In terms of biological role, serine protease that cleaves specifically after the sequence Trp-Glu-Leu-Gln. This Staphylococcus aureus (strain bovine RF122 / ET3-1) protein is Serine protease SplB (splB).